Reading from the N-terminus, the 71-residue chain is Gas vesicle protein A (71 aa).

The alpha helix 1 stretch occupies residues 12–22; sequence LAEVIDRILDK. Residues 23-32 form a beta-strand 1 region; it reads GIVIDAWVRV. The segment at 33–36 is beta turn; the sequence is SLVG. Residues 37–46 form a beta-strand 2 region; the sequence is IELLAIEARI. The alpha helix 2 stretch occupies residues 47-70; sequence VIASVETYLKYAEAVGLTQSAAVP.

The protein belongs to the gas vesicle GvpA family. As to quaternary structure, the gas vesicle shell is 2 nm thick and consists of a single layer of this protein. It forms helical ribs nearly perpendicular to the long axis of the vesicle.

It is found in the gas vesicle shell. In terms of biological role, gas vesicles (GV) are hollow, gas filled proteinaceous nanostructures found in some microorganisms. During planktonic growth they allow positioning of the organism at a favorable depth for light or nutrient acquisition. GVs are highly permeable to gas. GvpA forms the protein shell. The ratio of GvpA:GvpC is estimated to be 33:1 and more recently 25:1. The protein is Gas vesicle protein A of Dolichospermum flosaquae (Anabaena flos-aquae).